A 182-amino-acid chain; its full sequence is Probable phosphoheptose isomerase (182 aa).

Residues 29–182 form the SIS domain; it reads ISSAISSGNK…MICAMIDEKF (154 aa). 44–46 contacts substrate; that stretch reads NGG. Zn(2+) contacts are provided by His-53 and Glu-57. Substrate-binding positions include Glu-57, 86-87, 112-114, Ser-117, and Gln-164; these read ND and STS. Zn(2+) is bound by residues Gln-164 and His-172.

Belongs to the SIS family. GmhA subfamily. Zn(2+) serves as cofactor.

The protein resides in the cytoplasm. The catalysed reaction is 2 D-sedoheptulose 7-phosphate = D-glycero-alpha-D-manno-heptose 7-phosphate + D-glycero-beta-D-manno-heptose 7-phosphate. It participates in carbohydrate biosynthesis; D-glycero-D-manno-heptose 7-phosphate biosynthesis; D-glycero-alpha-D-manno-heptose 7-phosphate and D-glycero-beta-D-manno-heptose 7-phosphate from sedoheptulose 7-phosphate: step 1/1. In terms of biological role, catalyzes the isomerization of sedoheptulose 7-phosphate in D-glycero-D-manno-heptose 7-phosphate. The chain is Probable phosphoheptose isomerase from Thermoplasma acidophilum (strain ATCC 25905 / DSM 1728 / JCM 9062 / NBRC 15155 / AMRC-C165).